We begin with the raw amino-acid sequence, 224 residues long: DeSI-like protein At4g17486 (224 aa).

The PPPDE domain maps to 26–163; the sequence is TPVYLNVYDL…FCNCLLPESI (138 aa). Residues His-51 and Cys-125 contribute to the active site. A disordered region spans residues 176-201; the sequence is EFSDEDESNSEASSVSDEEGSEQHLI.

Belongs to the DeSI family.

The chain is DeSI-like protein At4g17486 from Arabidopsis thaliana (Mouse-ear cress).